A 150-amino-acid chain; its full sequence is Ribonuclease H (150 aa).

In terms of domain architecture, RNase H type-1 spans 7–148 (ESNIVEIWTD…ADQLATKARM (142 aa)). The Mg(2+) site is built by Asp16, Glu54, Asp76, and Asp140.

Belongs to the RNase H family. In terms of assembly, monomer. Requires Mg(2+) as cofactor.

The protein localises to the cytoplasm. It catalyses the reaction Endonucleolytic cleavage to 5'-phosphomonoester.. Its function is as follows. Endonuclease that specifically degrades the RNA of RNA-DNA hybrids. The polypeptide is Ribonuclease H (Granulibacter bethesdensis (strain ATCC BAA-1260 / CGDNIH1)).